The following is a 337-amino-acid chain: Ribonucleoside-diphosphate reductase small chain (337 aa).

Fe cation contacts are provided by Asp85, Glu116, and His119. Tyr123 is an active-site residue. Residues Glu178, Glu212, and His215 each coordinate Fe cation.

Belongs to the ribonucleoside diphosphate reductase small chain family. Heterodimer of a large and a small subunit. Requires Fe cation as cofactor.

The enzyme catalyses a 2'-deoxyribonucleoside 5'-diphosphate + [thioredoxin]-disulfide + H2O = a ribonucleoside 5'-diphosphate + [thioredoxin]-dithiol. Provides the precursors necessary for DNA synthesis. Catalyzes the biosynthesis of deoxyribonucleotides from the corresponding ribonucleotides. The protein is Ribonucleoside-diphosphate reductase small chain (RNR2) of Trypanosoma brucei brucei.